Reading from the N-terminus, the 222-residue chain is Peroxiredoxin (222 aa).

The Thioredoxin domain maps to 7–163 (PRLGEPAPAF…VIRLVDALQT (157 aa)). C49 (cysteine sulfenic acid (-SOH) intermediate) is an active-site residue. R126 contacts substrate. Residues C212 and C218 are joined by a disulfide bond.

This sequence belongs to the peroxiredoxin family. Prx6 subfamily. Homodecamer. Pentamer of dimers that assemble into a ring structure.

It is found in the cytoplasm. The catalysed reaction is a hydroperoxide + [thioredoxin]-dithiol = an alcohol + [thioredoxin]-disulfide + H2O. Functionally, thiol-specific peroxidase that catalyzes the reduction of hydrogen peroxide and organic hydroperoxides to water and alcohols, respectively. Plays a role in cell protection against oxidative stress by detoxifying peroxides. The protein is Peroxiredoxin of Aquifex aeolicus (strain VF5).